Reading from the N-terminus, the 144-residue chain is D-aminoacyl-tRNA deacylase (144 aa).

Residues 136 to 137 (GP) carry the Gly-cisPro motif, important for rejection of L-amino acids motif.

The protein belongs to the DTD family. As to quaternary structure, homodimer.

The protein localises to the cytoplasm. It catalyses the reaction glycyl-tRNA(Ala) + H2O = tRNA(Ala) + glycine + H(+). The catalysed reaction is a D-aminoacyl-tRNA + H2O = a tRNA + a D-alpha-amino acid + H(+). Its function is as follows. An aminoacyl-tRNA editing enzyme that deacylates mischarged D-aminoacyl-tRNAs. Also deacylates mischarged glycyl-tRNA(Ala), protecting cells against glycine mischarging by AlaRS. Acts via tRNA-based rather than protein-based catalysis; rejects L-amino acids rather than detecting D-amino acids in the active site. By recycling D-aminoacyl-tRNA to D-amino acids and free tRNA molecules, this enzyme counteracts the toxicity associated with the formation of D-aminoacyl-tRNA entities in vivo and helps enforce protein L-homochirality. The protein is D-aminoacyl-tRNA deacylase of Haemophilus influenzae (strain 86-028NP).